We begin with the raw amino-acid sequence, 380 residues long: Probable tRNA sulfurtransferase (380 aa).

A THUMP domain is found at 58–162; it reads EEVIERLKKV…MAFVYAGVIE (105 aa). ATP is bound by residues 178-179, 203-204, Arg-260, Gly-282, and Gln-291; these read LL and YF.

It belongs to the ThiI family.

Its subcellular location is the cytoplasm. It catalyses the reaction [ThiI sulfur-carrier protein]-S-sulfanyl-L-cysteine + a uridine in tRNA + 2 reduced [2Fe-2S]-[ferredoxin] + ATP + H(+) = [ThiI sulfur-carrier protein]-L-cysteine + a 4-thiouridine in tRNA + 2 oxidized [2Fe-2S]-[ferredoxin] + AMP + diphosphate. The enzyme catalyses [ThiS sulfur-carrier protein]-C-terminal Gly-Gly-AMP + S-sulfanyl-L-cysteinyl-[cysteine desulfurase] + AH2 = [ThiS sulfur-carrier protein]-C-terminal-Gly-aminoethanethioate + L-cysteinyl-[cysteine desulfurase] + A + AMP + 2 H(+). It functions in the pathway cofactor biosynthesis; thiamine diphosphate biosynthesis. In terms of biological role, catalyzes the ATP-dependent transfer of a sulfur to tRNA to produce 4-thiouridine in position 8 of tRNAs, which functions as a near-UV photosensor. Also catalyzes the transfer of sulfur to the sulfur carrier protein ThiS, forming ThiS-thiocarboxylate. This is a step in the synthesis of thiazole, in the thiamine biosynthesis pathway. The sulfur is donated as persulfide by IscS. This is Probable tRNA sulfurtransferase from Thermoanaerobacter sp. (strain X514).